A 180-amino-acid polypeptide reads, in one-letter code: Pro-glucagon (180 aa).

The first 20 residues, Met1–Gln20, serve as a signal peptide directing secretion. Residues Leu23–Phe58 are disordered. Position 54 is a phosphoserine (Ser54). The propeptide occupies Asn84–Ala89. A phosphoserine mark is found at Ser105 and Ser108. An Arginine amide modification is found at Arg127. Positions Asp131–Arg145 are excised as a propeptide. 2 positions are modified to phosphoserine: Ser150 and Ser152.

Belongs to the glucagon family. Proglucagon is post-translationally processed in a tissue-specific manner in pancreatic A cells and intestinal L cells. In pancreatic A cells, the major bioactive hormone is glucagon cleaved by PCSK2/PC2. In the intestinal L cells PCSK1/PC1 liberates GLP-1, GLP-2, glicentin and oxyntomodulin. GLP-1 is further N-terminally truncated by post-translational processing in the intestinal L cells resulting in GLP-1(7-37) GLP-1-(7-36)amide. The C-terminal amidation is neither important for the metabolism of GLP-1 nor for its effects on the endocrine pancreas.

The protein resides in the secreted. Its function is as follows. Plays a key role in glucose metabolism and homeostasis. Regulates blood glucose by increasing gluconeogenesis and decreasing glycolysis. A counterregulatory hormone of insulin, raises plasma glucose levels in response to insulin-induced hypoglycemia. Plays an important role in initiating and maintaining hyperglycemic conditions in diabetes. In terms of biological role, potent stimulator of glucose-dependent insulin release. Also stimulates insulin release in response to IL6. Plays important roles on gastric motility and the suppression of plasma glucagon levels. May be involved in the suppression of satiety and stimulation of glucose disposal in peripheral tissues, independent of the actions of insulin. Has growth-promoting activities on intestinal epithelium. May also regulate the hypothalamic pituitary axis (HPA) via effects on LH, TSH, CRH, oxytocin, and vasopressin secretion. Increases islet mass through stimulation of islet neogenesis and pancreatic beta cell proliferation. Inhibits beta cell apoptosis. Functionally, stimulates intestinal growth and up-regulates villus height in the small intestine, concomitant with increased crypt cell proliferation and decreased enterocyte apoptosis. The gastrointestinal tract, from the stomach to the colon is the principal target for GLP-2 action. Plays a key role in nutrient homeostasis, enhancing nutrient assimilation through enhanced gastrointestinal function, as well as increasing nutrient disposal. Stimulates intestinal glucose transport and decreases mucosal permeability. Significantly reduces food intake. Inhibits gastric emptying in humans. Suppression of gastric emptying may lead to increased gastric distension, which may contribute to satiety by causing a sensation of fullness. Its function is as follows. May modulate gastric acid secretion and the gastro-pyloro-duodenal activity. May play an important role in intestinal mucosal growth in the early period of life. This chain is Pro-glucagon (GCG), found in Cavia porcellus (Guinea pig).